The following is a 107-amino-acid chain: Thioredoxin (107 aa).

One can recognise a Thioredoxin domain in the interval 2–107 (SEVLHINDAD…QLANFINQHI (106 aa)). Cysteines 32 and 35 form a disulfide.

It belongs to the thioredoxin family.

In terms of biological role, participates in various redox reactions through the reversible oxidation of its active center dithiol to a disulfide and catalyzes dithiol-disulfide exchange reactions. This chain is Thioredoxin (trxA), found in Haemophilus influenzae (strain ATCC 51907 / DSM 11121 / KW20 / Rd).